We begin with the raw amino-acid sequence, 160 residues long: Serine-protein kinase RsbW (160 aa).

It belongs to the anti-sigma-factor family.

The enzyme catalyses L-seryl-[protein] + ATP = O-phospho-L-seryl-[protein] + ADP + H(+). The catalysed reaction is L-threonyl-[protein] + ATP = O-phospho-L-threonyl-[protein] + ADP + H(+). In terms of biological role, negative regulator of sigma-B activity. Phosphorylates and inactivates its specific antagonist protein, RsbV. Upon phosphorylation of RsbV, RsbW is released and binds to sigma-B, thereby blocking its ability to form an RNA polymerase holoenzyme (E-sigma-B). This is Serine-protein kinase RsbW from Bacillus anthracis (strain A0248).